A 27-amino-acid polypeptide reads, in one-letter code: Flagellar filament 34 kDa core protein (27 aa).

Belongs to the bacterial flagellin family. In terms of assembly, the flagellum consists of an outer layer composed of repeating units of FlaA around a core that contains one or all of five antigenically related polypeptides.

The protein resides in the periplasmic flagellum. It is found in the periplasm. In terms of biological role, component of the core of the flagella. This Spirochaeta aurantia protein is Flagellar filament 34 kDa core protein.